The chain runs to 317 residues: Putative 2-hydroxyacid dehydrogenase SAB2178 (317 aa).

NAD(+) contacts are provided by residues 155–156 (EI), 234–236 (ASR), and Asp260. Arg236 is an active-site residue. Glu265 is a catalytic residue. Residue His283 is the Proton donor of the active site. 283 to 286 (HIGN) provides a ligand contact to NAD(+).

Belongs to the D-isomer specific 2-hydroxyacid dehydrogenase family.

In Staphylococcus aureus (strain bovine RF122 / ET3-1), this protein is Putative 2-hydroxyacid dehydrogenase SAB2178.